The primary structure comprises 313 residues: Biotin synthase (313 aa).

The 227-residue stretch at 37-263 folds into the Radical SAM core domain; that stretch reads YYGKKVKLNM…INPTKEIRIA (227 aa). Residues Cys-55, Cys-59, and Cys-62 each coordinate [4Fe-4S] cluster. Residues Cys-98, Cys-131, Cys-191, and Arg-261 each contribute to the [2Fe-2S] cluster site.

Belongs to the radical SAM superfamily. Biotin synthase family. As to quaternary structure, homodimer. [4Fe-4S] cluster serves as cofactor. [2Fe-2S] cluster is required as a cofactor.

It carries out the reaction (4R,5S)-dethiobiotin + (sulfur carrier)-SH + 2 reduced [2Fe-2S]-[ferredoxin] + 2 S-adenosyl-L-methionine = (sulfur carrier)-H + biotin + 2 5'-deoxyadenosine + 2 L-methionine + 2 oxidized [2Fe-2S]-[ferredoxin]. It participates in cofactor biosynthesis; biotin biosynthesis; biotin from 7,8-diaminononanoate: step 2/2. Its function is as follows. Catalyzes the conversion of dethiobiotin (DTB) to biotin by the insertion of a sulfur atom into dethiobiotin via a radical-based mechanism. This is Biotin synthase from Staphylococcus epidermidis (strain ATCC 12228 / FDA PCI 1200).